The following is a 213-amino-acid chain: MDFEKESRMMVEYQLKRRGISDEKVLNAFLKVKRHLFVPKDLERYAYDDCPLPIGEGQTISQPYIIGLMLQLLELRENDVVLEIGTGSGYQTALLAEIVRLVYTIERNETLAQRAKNKFEELGYKNIVLEVGDGTKGWTKEEIEFDGIIVSAAAPKVPEPLFSQLKIGGRMVIPIGSRTFQRLHKITKLEDGNMKVEYSDGCMFVPLIGEYGW.

Serine 61 is a catalytic residue.

The protein belongs to the methyltransferase superfamily. L-isoaspartyl/D-aspartyl protein methyltransferase family.

Its subcellular location is the cytoplasm. The catalysed reaction is [protein]-L-isoaspartate + S-adenosyl-L-methionine = [protein]-L-isoaspartate alpha-methyl ester + S-adenosyl-L-homocysteine. Catalyzes the methyl esterification of L-isoaspartyl residues in peptides and proteins that result from spontaneous decomposition of normal L-aspartyl and L-asparaginyl residues. It plays a role in the repair and/or degradation of damaged proteins. The polypeptide is Protein-L-isoaspartate O-methyltransferase (Petrotoga mobilis (strain DSM 10674 / SJ95)).